Consider the following 205-residue polypeptide: Holliday junction branch migration complex subunit RuvA (205 aa).

A domain I region spans residues 1–64 (MIGKLKGVID…EDQIKLFGFR (64 aa)). The segment at 65 to 143 (TDHEREWFRL…SFANVDPTVV (79 aa)) is domain II. The segment at 144-154 (HLAGDLDDQRA) is flexible linker. The segment at 154–205 (APRPVRDAISALVNLGYGQPQATAAIAAASRGAGENAETAQLIRLGLKELSK) is domain III.

The protein belongs to the RuvA family. In terms of assembly, homotetramer. Forms an RuvA(8)-RuvB(12)-Holliday junction (HJ) complex. HJ DNA is sandwiched between 2 RuvA tetramers; dsDNA enters through RuvA and exits via RuvB. An RuvB hexamer assembles on each DNA strand where it exits the tetramer. Each RuvB hexamer is contacted by two RuvA subunits (via domain III) on 2 adjacent RuvB subunits; this complex drives branch migration. In the full resolvosome a probable DNA-RuvA(4)-RuvB(12)-RuvC(2) complex forms which resolves the HJ.

It is found in the cytoplasm. Its function is as follows. The RuvA-RuvB-RuvC complex processes Holliday junction (HJ) DNA during genetic recombination and DNA repair, while the RuvA-RuvB complex plays an important role in the rescue of blocked DNA replication forks via replication fork reversal (RFR). RuvA specifically binds to HJ cruciform DNA, conferring on it an open structure. The RuvB hexamer acts as an ATP-dependent pump, pulling dsDNA into and through the RuvAB complex. HJ branch migration allows RuvC to scan DNA until it finds its consensus sequence, where it cleaves and resolves the cruciform DNA. In Nitrobacter winogradskyi (strain ATCC 25391 / DSM 10237 / CIP 104748 / NCIMB 11846 / Nb-255), this protein is Holliday junction branch migration complex subunit RuvA.